Consider the following 85-residue polypeptide: Photosystem I reaction center subunit PsaK (85 aa).

The next 2 helical transmembrane spans lie at 13 to 33 (VSWT…AIAI) and 59 to 79 (GAML…ILGL).

Belongs to the PsaG/PsaK family.

The protein resides in the cellular thylakoid membrane. The polypeptide is Photosystem I reaction center subunit PsaK (Synechococcus sp. (strain WH7803)).